Here is a 322-residue protein sequence, read N- to C-terminus: uncharacterized protein (322 aa).

This is an uncharacterized protein from Aquifex aeolicus (strain VF5).